A 203-amino-acid polypeptide reads, in one-letter code: Ras-related protein Rab-8B (203 aa).

GTP-binding positions include 22-29, 70-74, and 128-131; these read GDSGVGKS, DTAGQ, and NKCD. Residues C202 and C203 are each lipidated (S-geranylgeranyl cysteine).

This sequence belongs to the small GTPase superfamily. Rab family.

It is found in the cell membrane. In terms of biological role, protein transport. Probably involved in vesicular traffic. The chain is Ras-related protein Rab-8B (rab8B) from Dictyostelium discoideum (Social amoeba).